The primary structure comprises 1035 residues: Tyrosine-protein kinase-like otk (1035 aa).

The first 23 residues, 1-23 (MDMDVMMISMCILASTLMAPGWA), serve as a signal peptide directing secretion. 5 consecutive Ig-like C2-type domains span residues 24-109 (STSG…REAS), 110-199 (PPAK…RVMS), 251-365 (PEDL…APLN), 368-464 (PGLL…VSIN), and 469-559 (PKFS…VQLV). Residues 24–582 (STSGFLRVPQ…GGDGFLVTRA (559 aa)) are Extracellular-facing. Cystine bridges form between Cys-47-Cys-96, Cys-138-Cys-188, Cys-276-Cys-354, Cys-399-Cys-448, and Cys-491-Cys-543. 6 N-linked (GlcNAc...) asparagine glycosylation sites follow: Asn-336, Asn-418, Asn-430, Asn-445, Asn-513, and Asn-525. A helical transmembrane segment spans residues 583–603 (VLITMTVALAYIVLVVGLMLW). Topologically, residues 604-1035 (CRYRRQARKA…SKAMQSVAEK (432 aa)) are cytoplasmic. Disordered stretches follow at residues 623 to 683 (AGGD…KSVY) and 721 to 775 (AQSD…KEEE). The segment covering 658 to 676 (KSNGDAQKSDDTACSQQSR) has biased composition (polar residues). Ser-681 carries the post-translational modification Phosphoserine. Residues 693–1029 (LSELLQIGRG…QLGSALSKAM (337 aa)) enclose the Protein kinase; inactive domain. Positions 723–734 (SDKDADTEKQHS) are enriched in basic and acidic residues. Acidic residues predominate over residues 766–775 (DDIEEIKEEE).

Belongs to the protein kinase superfamily. Tyr protein kinase family. Insulin receptor subfamily. As to quaternary structure, interacts with plexA; component of a receptor complex that mediates the repulsive signaling in response to Semaphorin ligands.

It localises to the cell membrane. Functionally, acts as a calcium-dependent, homophilic cell adhesion molecule that regulates neural recognition during the development of the nervous system. Component of the repulsive Plexin signaling response to regulate motor axon guidance at the embryonic stage. Also component of a receptor complex that is required in the adult visual system to innervate the lamina layer; specific targeting of R1-R6 axons. The sequence is that of Tyrosine-protein kinase-like otk from Drosophila persimilis (Fruit fly).